The sequence spans 320 residues: ATP-dependent 6-phosphofructokinase (320 aa).

Glycine 12 is an ATP binding site. ADP is bound by residues 22 to 26 (RGVVR) and 55 to 60 (RYSVSD). Residues 73–74 (RF) and 103–106 (GDGS) contribute to the ATP site. Aspartate 104 is a binding site for Mg(2+). 126–128 (TID) contributes to the substrate binding site. Aspartate 128 serves as the catalytic Proton acceptor. Arginine 155 serves as a coordination point for ADP. Substrate-binding positions include arginine 163 and 170–172 (MGR). ADP is bound by residues 186–188 (GCE), lysine 212, and 214–216 (KKH). Substrate-binding positions include glutamate 223, arginine 244, and 250-253 (HIQR).

It belongs to the phosphofructokinase type A (PFKA) family. ATP-dependent PFK group I subfamily. Prokaryotic clade 'B1' sub-subfamily. Homotetramer. Mg(2+) serves as cofactor.

Its subcellular location is the cytoplasm. The catalysed reaction is beta-D-fructose 6-phosphate + ATP = beta-D-fructose 1,6-bisphosphate + ADP + H(+). Its pathway is carbohydrate degradation; glycolysis; D-glyceraldehyde 3-phosphate and glycerone phosphate from D-glucose: step 3/4. With respect to regulation, allosterically activated by ADP and other diphosphonucleosides, and allosterically inhibited by phosphoenolpyruvate. Catalyzes the phosphorylation of D-fructose 6-phosphate to fructose 1,6-bisphosphate by ATP, the first committing step of glycolysis. This Salmonella agona (strain SL483) protein is ATP-dependent 6-phosphofructokinase.